The following is a 184-amino-acid chain: ATP synthase subunit b, chloroplastic (184 aa).

Residues 27–49 (LATNPINLSVVFGVLIFFGKGVL) form a helical membrane-spanning segment.

The protein belongs to the ATPase B chain family. F-type ATPases have 2 components, F(1) - the catalytic core - and F(0) - the membrane proton channel. F(1) has five subunits: alpha(3), beta(3), gamma(1), delta(1), epsilon(1). F(0) has four main subunits: a(1), b(1), b'(1) and c(10-14). The alpha and beta chains form an alternating ring which encloses part of the gamma chain. F(1) is attached to F(0) by a central stalk formed by the gamma and epsilon chains, while a peripheral stalk is formed by the delta, b and b' chains.

The protein localises to the plastid. It localises to the chloroplast thylakoid membrane. In terms of biological role, f(1)F(0) ATP synthase produces ATP from ADP in the presence of a proton or sodium gradient. F-type ATPases consist of two structural domains, F(1) containing the extramembraneous catalytic core and F(0) containing the membrane proton channel, linked together by a central stalk and a peripheral stalk. During catalysis, ATP synthesis in the catalytic domain of F(1) is coupled via a rotary mechanism of the central stalk subunits to proton translocation. Functionally, component of the F(0) channel, it forms part of the peripheral stalk, linking F(1) to F(0). The polypeptide is ATP synthase subunit b, chloroplastic (Nasturtium officinale (Watercress)).